We begin with the raw amino-acid sequence, 438 residues long: L-cysteine:1D-myo-inositol 2-amino-2-deoxy-alpha-D-glucopyranoside ligase (438 aa).

The disordered stretch occupies residues 1–27 (MKSWSSRPVPELPGTGTAPRVHDTSTG). Cysteine 44 contacts Zn(2+). L-cysteinyl-5'-AMP is bound by residues 44–47 (CGIT), threonine 59, and 82–84 (NVT). Residues 46–56 (ITPYDATHMGH) carry the 'HIGH' region motif. The 'ERGGDP' region motif lies at 208–213 (DHGGDP). Position 249 (tryptophan 249) interacts with L-cysteinyl-5'-AMP. Residue cysteine 253 participates in Zn(2+) binding. Residue 271-273 (GSD) participates in L-cysteinyl-5'-AMP binding. Histidine 278 contributes to the Zn(2+) binding site. An L-cysteinyl-5'-AMP-binding site is contributed by valine 304. The 'KMSKS' region signature appears at 310 to 314 (KMSKS).

This sequence belongs to the class-I aminoacyl-tRNA synthetase family. MshC subfamily. Monomer. Requires Zn(2+) as cofactor.

It catalyses the reaction 1D-myo-inositol 2-amino-2-deoxy-alpha-D-glucopyranoside + L-cysteine + ATP = 1D-myo-inositol 2-(L-cysteinylamino)-2-deoxy-alpha-D-glucopyranoside + AMP + diphosphate + H(+). In terms of biological role, catalyzes the ATP-dependent condensation of GlcN-Ins and L-cysteine to form L-Cys-GlcN-Ins. In Kocuria rhizophila (strain ATCC 9341 / DSM 348 / NBRC 103217 / DC2201), this protein is L-cysteine:1D-myo-inositol 2-amino-2-deoxy-alpha-D-glucopyranoside ligase.